Here is a 2393-residue protein sequence, read N- to C-terminus: Leucine-rich repeat serine/threonine-protein kinase 1 (2393 aa).

10 ANK repeats span residues 56 to 86 (HGRTPLMLAAHNGKLDSLRTILMLSPNSLNL), 90 to 120 (RGKTALHMAAESGETSIVLELVELGSDPMKS), 123 to 152 (EGHCALELAQMAGHNEVAAKLIDAIQKESE), 197 to 226 (EDETALLIACTNGHIEIVRHLLQFEEHLLQ), 230 to 259 (SKDTVIHAAVSSQNVEVLQLCLEKFPQLVK), 264 to 293 (EGSTCLHWAARCGSSECVSTILNFPFPSEF), 317 to 347 (ECRTAMYLAVAEGHLEVVKAMTDFKCTSIDG), 361 to 390 (RGRTPFMLAAFNQNLPLMTLLLDAGADVNL), 407 to 437 (IGSGALVEAVRSDGLHIVHFLLDRGALDTDN), and 439 to 464 (ALRLAAQGKNEKLIRVFLVRLVFADP). 5 LRR repeats span residues 532 to 553 (AITRVDLSDNRLNTFPSILFQM), 555 to 576 (SLRSLNLADNSIRKIEIPTYYI), 580 to 600 (SLEILNLRNNQLECIAIQFLS), 604 to 625 (QLQQLDVSKNELSQLPEYIWLC), and 627 to 648 (ALKELNASYNRLSTLPMVARAS). The disordered stretch occupies residues 649–675 (RGERPRLNNSNNNFNTQSPTQESNPIV). LRR repeat units lie at residues 718–739 (TLTTINLSFNKFHTFPFCLACT), 742–763 (RLLILNMSNNSMTSLPPMACVP), and 765–787 (HLRTLDLSYNKIQESFIEASPLH). The disordered stretch occupies residues 797-844 (TSNGSMLPKRRNSPARQHRSRSKSAVRSQRSLSVSRHHALIDPQKEEE). A compositionally biased stretch (basic residues) spans 804–820 (PKRRNSPARQHRSRSKS). The segment covering 821–830 (AVRSQRSLSV) has biased composition (polar residues). A compositionally biased stretch (basic and acidic residues) spans 835-844 (ALIDPQKEEE). LRR repeat units follow at residues 856-877 (WLKTLQLAGNRLRSISVTNAAS), 883-905 (ALNVMDISDNKLLQAPPDVARLT), 906-928 (LLSMLNLSGNTAIKELPPDYGML), and 930-952 (RLWSLSLKGCSLKEPLESMVNVE). One can recognise a Roc domain in the interval 969–1167 (ESKTYHHLRL…NTIYRTAWEV (199 aa)). GTP-binding positions include 982–989 (GSDGVGKS), 1040–1044 (DFGGQ), and 1098–1101 (TNLD). The COR domain maps to 1233 to 1422 (FYAACTFLHD…GFWSRLVTRI (190 aa)). 2 disordered regions span residues 1361-1382 (CPSPAGSPTKSPLRRTSPTDQN) and 1596-1633 (RNGSRSRTSSSASHRRSQDDGELPITSSSHMKGSRTTG). 2 stretches are compositionally biased toward polar residues: residues 1366 to 1382 (GSPTKSPLRRTSPTDQN) and 1620 to 1633 (ITSSSHMKGSRTTG). The region spanning 1694 to 1992 (LKRSRMLGRG…LVGFCAAPEF (299 aa)) is the Protein kinase domain. Residues 1700–1708 (LGRGAFGFV) and K1726 contribute to the ATP site. The Proton acceptor role is filled by D1847.

The protein belongs to the protein kinase superfamily. TKL Ser/Thr protein kinase family. ROCO subfamily. Mg(2+) serves as cofactor. The cofactor is Mn(2+). In terms of tissue distribution, expressed in cell bodies, but not in dendritic or axonal processes, of adult head neurons. Also present in non-neuronal tissues, such as the body wall musculature and the epithelial cells of the nematode vulva.

The protein resides in the golgi apparatus. The enzyme catalyses L-seryl-[protein] + ATP = O-phospho-L-seryl-[protein] + ADP + H(+). It carries out the reaction L-threonyl-[protein] + ATP = O-phospho-L-threonyl-[protein] + ADP + H(+). Its function is as follows. Determines polarized sorting of synaptic vesicle (SV) proteins to the axons by excluding SV proteins from the dendrite-specific transport machinery in the Golgi. Role in stress response. Appears to antagonize the effects of pink-1 both in the regulation of axon guidance and stress response. This is Leucine-rich repeat serine/threonine-protein kinase 1 (lrk-1) from Caenorhabditis elegans.